Here is a 432-residue protein sequence, read N- to C-terminus: Glutamyl-tRNA reductase (432 aa).

Substrate contacts are provided by residues 49–52 (TCNR), Ser107, 112–114 (ETQ), and Gln118. The active-site Nucleophile is the Cys50. 186-191 (GAGEMG) is a binding site for NADP(+).

Belongs to the glutamyl-tRNA reductase family. In terms of assembly, homodimer.

It catalyses the reaction (S)-4-amino-5-oxopentanoate + tRNA(Glu) + NADP(+) = L-glutamyl-tRNA(Glu) + NADPH + H(+). It participates in porphyrin-containing compound metabolism; protoporphyrin-IX biosynthesis; 5-aminolevulinate from L-glutamyl-tRNA(Glu): step 1/2. Functionally, catalyzes the NADPH-dependent reduction of glutamyl-tRNA(Glu) to glutamate 1-semialdehyde (GSA). The sequence is that of Glutamyl-tRNA reductase from Campylobacter jejuni subsp. jejuni serotype O:23/36 (strain 81-176).